The primary structure comprises 419 residues: uncharacterized protein (419 aa).

[4Fe-4S] cluster-binding residues include Cys38, Cys44, Cys47, and Cys126. S-adenosyl-L-methionine contacts are provided by Gln250, Tyr280, Glu301, and Asp346. The active-site Nucleophile is Cys373.

This sequence belongs to the class I-like SAM-binding methyltransferase superfamily. RNA M5U methyltransferase family.

This is an uncharacterized protein from Prochlorococcus marinus (strain SARG / CCMP1375 / SS120).